We begin with the raw amino-acid sequence, 226 residues long: Phosphoglycolate phosphatase (226 aa).

D5 serves as the catalytic Nucleophile. Mg(2+)-binding residues include D5 and D7. Residue K142 coordinates substrate. 2 residues coordinate Mg(2+): D164 and D168.

It belongs to the archaeal SPP-like hydrolase family. Mg(2+) is required as a cofactor.

It carries out the reaction 2-phosphoglycolate + H2O = glycolate + phosphate. Catalyzes the dephosphorylation of 2-phosphoglycolate. This is Phosphoglycolate phosphatase from Sulfurisphaera tokodaii (strain DSM 16993 / JCM 10545 / NBRC 100140 / 7) (Sulfolobus tokodaii).